Here is a 133-residue protein sequence, read N- to C-terminus: uncharacterized protein (133 aa).

The disordered stretch occupies residues T107–V133.

This is an uncharacterized protein from Homo sapiens (Human).